The following is a 72-amino-acid chain: Disintegrin cotiarin (72 aa).

Residues 1–72 form the Disintegrin domain; sequence EAGEECDCGA…SADCPRNRFH (72 aa). Cystine bridges form between cysteine 6–cysteine 21, cysteine 8–cysteine 16, cysteine 15–cysteine 38, cysteine 29–cysteine 35, cysteine 34–cysteine 59, and cysteine 47–cysteine 66. Residues 51 to 53 carry the Cell attachment site motif; that stretch reads RGD. The interval 51 to 72 is disordered; sequence RGDNPDDRCTGQSADCPRNRFH.

The protein belongs to the venom metalloproteinase (M12B) family. P-II subfamily. P-IIa sub-subfamily. Monomer. As to expression, expressed by the venom gland.

Its subcellular location is the secreted. Inhibits fibrinogen interaction with platelets. Acts by binding to alpha-IIb/beta-3 (ITGA2B/ITGB3) on the platelet surface and inhibits aggregation induced by ADP, thrombin, platelet-activating factor and collagen. This is Disintegrin cotiarin from Bothrops cotiara (Cotiara).